A 461-amino-acid polypeptide reads, in one-letter code: Flavin-containing monooxygenase FMO GS-OX4 (461 aa).

Residue 17-22 participates in FAD binding; sequence GAGAAG. 211–216 is a binding site for NADP(+); it reads GNFASG.

Belongs to the FMO family.

The catalysed reaction is a (Z)-omega-(methylsulfanyl)-N-sulfo-alkylhydroximate S-glucoside + NADPH + O2 + H(+) = a (Z)-omega-(methylsulfinyl)-alkyl-glucosinolate + NADP(+) + H2O. Its function is as follows. Catalyzes the conversion of methylthioalkyl glucosinolates of any chain length into methylsulfinylalkyl glucosinolates. This is Flavin-containing monooxygenase FMO GS-OX4 (FMOGS-OX4) from Arabidopsis thaliana (Mouse-ear cress).